The chain runs to 306 residues: [methyl-Co(III) glycine betaine-specific corrinoid protein]--tetrahydrofolate methyltransferase (306 aa).

This sequence belongs to the MtrH family.

It catalyses the reaction methyl-Co(III)-[glycine betaine-specific corrinoid protein] + (6S)-5,6,7,8-tetrahydrofolate = Co(I)-[glycine betaine-specific corrinoid protein] + (6S)-5-methyl-5,6,7,8-tetrahydrofolate + H(+). In terms of biological role, methyltransferase able to catalyze the transfer of a methyl group from methylcobalamin (methylCbl) to tetrahydrofolate (THF) in vitro, to generate methyl-THF and cob(I)alamin. In vivo, the methyl group probably comes from the adjacently encoded methylated corrinoid protein DSY3155. The methyl group may then be ultimately converted to carbon dioxide, and its oxidation would also provide reducing equivalents for anaerobic respiration. Thus, may function in the pathway that allows anaerobic methylotrophic growth of D.hafniense using glycine betaine. In Desulfitobacterium hafniense (strain Y51), this protein is [methyl-Co(III) glycine betaine-specific corrinoid protein]--tetrahydrofolate methyltransferase.